Consider the following 396-residue polypeptide: Probable sugar efflux transporter (396 aa).

Topologically, residues 1-14 (MTTNTVSRKVAWLR) are cytoplasmic. A helical transmembrane segment spans residues 15–35 (VVTLAVAAFIFNTTEFVPVGL). The Periplasmic segment spans residues 36 to 49 (LSDIAQSFHMQTAQ). Residues 50 to 70 (VGIMLTIYAWVVALMSLPFML) traverse the membrane as a helical segment. Residues 71–80 (MTSQVERRKL) are Cytoplasmic-facing. A helical transmembrane segment spans residues 81–101 (LICLFVVFIASHVLSFLSWSF). Residue Thr-102 is a topological domain, periplasmic. The chain crosses the membrane as a helical span at residues 103–123 (VLVISRIGVAFAHAIFWSITA). At 124–135 (SLAIRMAPAGKR) the chain is on the cytoplasmic side. A helical transmembrane segment spans residues 136–156 (AQALSLIATGTALAMVLGLPL). Residues 157–169 (GRIVGQYFGWRMT) are Periplasmic-facing. Residues 170–190 (FFAIGIGALVTLLCLIKLLPL) form a helical membrane-spanning segment. At 191 to 208 (LPSEHSGSLKSLPLLFRR) the chain is on the cytoplasmic side. A helical transmembrane segment spans residues 209–229 (PALMSIYLLTVVVVTAHYTAY). The Periplasmic segment spans residues 230 to 245 (SYIEPFVQNIAGFSAN). Residues 246 to 266 (FATALLLLLGGAGIIGSVIFG) traverse the membrane as a helical segment. Residues 267–274 (KLGNQYAS) lie on the Cytoplasmic side of the membrane. Residues 275 to 295 (ALVSTAIALLLVCLALLLPAA) form a helical membrane-spanning segment. Residues 296–298 (NSE) are Periplasmic-facing. The chain crosses the membrane as a helical span at residues 299-319 (IHLGVLSIFWGIAMMIIGLGM). Over 320 to 332 (QVKVLALAPDATD) the chain is Cytoplasmic. Residues 333–353 (VAMALFSGIFNIGIGAGALVG) form a helical membrane-spanning segment. The Periplasmic portion of the chain corresponds to 354–363 (NQVSLHWSMS). The helical transmembrane segment at 364 to 384 (MIGYVGAVPAFAALIWSIIIF) threads the bilayer. Over 385–396 (RRWPVTLEEQTQ) the chain is Cytoplasmic.

Belongs to the major facilitator superfamily. SotB (TC 2.A.1.2) family.

It is found in the cell inner membrane. Its function is as follows. Involved in the efflux of sugars. The physiological role may be the reduction of the intracellular concentration of toxic sugars or sugar metabolites. The protein is Probable sugar efflux transporter of Shigella flexneri.